A 161-amino-acid polypeptide reads, in one-letter code: uncharacterized protein (161 aa).

This is an uncharacterized protein from Acidianus convivator (ATV).